The sequence spans 37 residues: Large ribosomal subunit protein bL36 (37 aa).

The protein belongs to the bacterial ribosomal protein bL36 family.

The chain is Large ribosomal subunit protein bL36 from Aquifex aeolicus (strain VF5).